The following is a 235-amino-acid chain: Large ribosomal subunit protein uL1 (235 aa).

Belongs to the universal ribosomal protein uL1 family. In terms of assembly, part of the 50S ribosomal subunit.

Its function is as follows. Binds directly to 23S rRNA. The L1 stalk is quite mobile in the ribosome, and is involved in E site tRNA release. Protein L1 is also a translational repressor protein, it controls the translation of the L11 operon by binding to its mRNA. The protein is Large ribosomal subunit protein uL1 of Mycobacteroides abscessus (strain ATCC 19977 / DSM 44196 / CCUG 20993 / CIP 104536 / JCM 13569 / NCTC 13031 / TMC 1543 / L948) (Mycobacterium abscessus).